Reading from the N-terminus, the 34-residue chain is Photosystem II reaction center protein M (34 aa).

Residues 7 to 27 (GFVATLLFVLVPAIFLIILYI) traverse the membrane as a helical segment.

It belongs to the PsbM family. In terms of assembly, PSII is composed of 1 copy each of membrane proteins PsbA, PsbB, PsbC, PsbD, PsbE, PsbF, PsbH, PsbI, PsbJ, PsbK, PsbL, PsbM, PsbT, PsbX, PsbY, PsbZ, Psb30/Ycf12, peripheral proteins PsbO, CyanoQ (PsbQ), PsbU, PsbV and a large number of cofactors. It forms dimeric complexes.

Its subcellular location is the cellular thylakoid membrane. Its function is as follows. One of the components of the core complex of photosystem II (PSII). PSII is a light-driven water:plastoquinone oxidoreductase that uses light energy to abstract electrons from H(2)O, generating O(2) and a proton gradient subsequently used for ATP formation. It consists of a core antenna complex that captures photons, and an electron transfer chain that converts photonic excitation into a charge separation. This subunit is found at the monomer-monomer interface. The protein is Photosystem II reaction center protein M of Synechococcus sp. (strain RCC307).